The primary structure comprises 375 residues: Alcohol dehydrogenase 6 (375 aa).

Positions 47, 69, 99, 102, 105, 113, and 175 each coordinate Zn(2+). NAD(+) contacts are provided by residues 200-205 (GLGGVG), aspartate 224, lysine 229, 293-295 (VGS), and arginine 370.

The protein belongs to the zinc-containing alcohol dehydrogenase family. Class-V subfamily. Dimer. Requires Zn(2+) as cofactor. As to expression, liver.

Its subcellular location is the cytoplasm. It catalyses the reaction a primary alcohol + NAD(+) = an aldehyde + NADH + H(+). The catalysed reaction is a secondary alcohol + NAD(+) = a ketone + NADH + H(+). Its function is as follows. Alcohol dehydrogenase. Catalyzes the NAD-dependent oxidation of primary alcohols to the corresponding aldehydes. Oxidizes secondary alcohols to the corresponding ketones. The chain is Alcohol dehydrogenase 6 (ADH6) from Peromyscus maniculatus (North American deer mouse).